Here is a 323-residue protein sequence, read N- to C-terminus: NAC transcription factor 25 (323 aa).

Residues 16–177 (LPPGFRFHPT…DWVLCRIYKK (162 aa)) enclose the NAC domain. Residues 114–183 (VGVKKALVFY…IYKKNSSQRP (70 aa)) mediate DNA binding. Positions 201–221 (KSSANSSSTSVLDNNDNNNNN) are enriched in low complexity. Positions 201–223 (KSSANSSSTSVLDNNDNNNNNNE) are disordered.

In terms of tissue distribution, expressed specifically in the tapetum.

The protein localises to the nucleus. Its function is as follows. Transcription factor of the NAC family. May be associated with anther development and pollen production. Required for normal seed development and morphology. The chain is NAC transcription factor 25 (NAC025) from Arabidopsis thaliana (Mouse-ear cress).